The primary structure comprises 427 residues: MSRSETLFANAQKHIPGGVNSPVRAFKSVGGTPLFFKHAAGAYVTDEDDKRYVDYVGSWGPMILGHSHPDVLDAVRNQLEHGLSYGAPTAMETEMADLVCELVPSMEMVRMVSSGTEATMSAIRLARGFTGRDSIIKFEGCYHGHSDSLLVKAGSGALTLGVPSSPGVPAAFAKHTLTVPFNDLNAVRDLLAEVGQEVACIIVEPVAGNMNCVPPAPGYLQGLRALCDEHGVVLIFDEVMTGFRVALGGAQAYYDVKPDLSTFGKIIGGGMPVGCFGGKREIMSHIAPLGPVYQAGTLSGNPLAMAAGLTTLRLISRPGFHDELSDYTRRLLEGLQQRADAAGIAFVTTQAGGMFGLYFSDASEIVTFEDVMTSDAERFKRFFHLMLEGGVYLAPSAFEAGFTSIAHGDAELKLTLDAAEKAFAALK.

Lysine 265 is modified (N6-(pyridoxal phosphate)lysine).

The protein belongs to the class-III pyridoxal-phosphate-dependent aminotransferase family. HemL subfamily. As to quaternary structure, homodimer. Pyridoxal 5'-phosphate is required as a cofactor.

The protein localises to the cytoplasm. The catalysed reaction is (S)-4-amino-5-oxopentanoate = 5-aminolevulinate. It functions in the pathway porphyrin-containing compound metabolism; protoporphyrin-IX biosynthesis; 5-aminolevulinate from L-glutamyl-tRNA(Glu): step 2/2. The chain is Glutamate-1-semialdehyde 2,1-aminomutase from Pseudomonas syringae pv. tomato (strain ATCC BAA-871 / DC3000).